The primary structure comprises 451 residues: Porin AaxA (451 aa).

Positions 1-27 are cleaved as a signal peptide; that stretch reads MASFHSSLLTALCTLCTYGILTMPAYG.

This sequence belongs to the OprB family.

The protein localises to the cell outer membrane. Functionally, facilitates L-arginine uptake, as part of the AaxABC system. The arginine uptake by the bacterium in the macrophage may be a virulence factor against the host innate immune response. The polypeptide is Porin AaxA (aaxA) (Chlamydia caviae (strain ATCC VR-813 / DSM 19441 / 03DC25 / GPIC) (Chlamydophila caviae)).